The chain runs to 307 residues: Fructokinase (307 aa).

This sequence belongs to the carbohydrate kinase PfkB family.

The enzyme catalyses D-fructose + ATP = D-fructose 6-phosphate + ADP + H(+). In Escherichia coli, this protein is Fructokinase (cscK).